The primary structure comprises 312 residues: Probable HTH-type transcriptional regulator LrhA (312 aa).

One can recognise an HTH lysR-type domain in the interval Leu11 to Thr68. Positions Phe28–Gln47 form a DNA-binding region, H-T-H motif.

The protein belongs to the LysR transcriptional regulatory family.

Its function is as follows. Not known, does not seem to act on the proton translocating NADH dehydrogenase genes (nuoA-N) which are part of the lrhA operon. This chain is Probable HTH-type transcriptional regulator LrhA (lrhA), found in Escherichia coli (strain K12).